Reading from the N-terminus, the 498-residue chain is Glycerol kinase (498 aa).

Thr-12 lines the ADP pocket. Thr-12, Thr-13, and Ser-14 together coordinate ATP. Thr-12 lines the sn-glycerol 3-phosphate pocket. ADP is bound at residue Arg-16. Sn-glycerol 3-phosphate is bound by residues Arg-82, Glu-83, Tyr-134, and Asp-244. Glycerol is bound by residues Arg-82, Glu-83, Tyr-134, Asp-244, and Gln-245. ADP is bound by residues Thr-266 and Gly-310. ATP contacts are provided by Thr-266, Gly-310, Gln-314, and Gly-411. ADP is bound by residues Gly-411 and Asn-415.

The protein belongs to the FGGY kinase family.

It carries out the reaction glycerol + ATP = sn-glycerol 3-phosphate + ADP + H(+). Its pathway is polyol metabolism; glycerol degradation via glycerol kinase pathway; sn-glycerol 3-phosphate from glycerol: step 1/1. Its activity is regulated as follows. Inhibited by fructose 1,6-bisphosphate (FBP). Functionally, key enzyme in the regulation of glycerol uptake and metabolism. Catalyzes the phosphorylation of glycerol to yield sn-glycerol 3-phosphate. The polypeptide is Glycerol kinase (Roseiflexus sp. (strain RS-1)).